The following is a 419-amino-acid chain: RNA polymerase sigma factor sigD, chloroplastic (419 aa).

The transit peptide at 1–52 (MATTIPTTATATMCPSPPVPTISPLLRTTHQCQPSPSLSSPFSIKLSTALVC) directs the protein to the chloroplast. The Polymerase core binding signature appears at 207-220 (DLIQEGSIGLLRGA). The H-T-H motif DNA-binding region spans 377 to 396 (FEEIGKSLKLSRERVRQING).

The protein belongs to the sigma-70 factor family. In terms of tissue distribution, mostly expressed in leaves, and to a lesser extent in roots. Present in seedlings.

Its subcellular location is the plastid. The protein localises to the chloroplast. Sigma factors are initiation factors that promote the attachment of plastid-encoded RNA polymerase (PEP) to specific initiation sites and are then released. Regulates transcription of the ndhF gene which codes for a subunit of the plastid NDH [NAD(P)H dehydrogenase] complex. This Arabidopsis thaliana (Mouse-ear cress) protein is RNA polymerase sigma factor sigD, chloroplastic (SIGD).